An 851-amino-acid chain; its full sequence is MNSTDKLDSHTPMMQQYLRLKAQHPEILLFYRMGDFYELFYDDAKRASQLLDISLTKRGASAGEPIPMAGVPHHAVENYLAKLVQLGESVALCEQIGDPATSKGPVERKVVRIVTPGTITDEALLQERQDNLLAAIWQDARGFGYATLDISSGRFRVAEPADIETMAAELQRTNPAELLYPETFEQMSLIEQRHGLRRRPLWEFEPETARQQLNLQFGTRDLTGFGVEQAHQALRAAGCLLQYVKDTQRTSLPHIRGITMERQQDGIIMDAATRRNLELTQNLSGGSENTLAAILDRSVTAMGSRMLKRWLHMPTRDIKVLNNRQQAIGSLQDLYSDLQPSLRQVGDLERILARLALRSARPRDLARMRHAFQQLPDIHALLKGVETPYVQQLLSQVGQFDELQDLLERAVVEAPPVLVRDGGVIAPGYNSELDEWRALADGATDYLDRLEIREREKLGLDTLKVGFNGVHGYYIQVSRGQSHLVPIHYVRRQTLKNAERYIIPELKEYEDKVLTSKGKALAIEKGLYEELFDLLLPHLGDLQQSAAALAELDVLANLAERAETLNYACPTISEQPGVRITEGRHPVVEQVLSEPFISNPLSLSPQRRMLIITGPNMGGKSTYMRQTALIVLMAHIGSYVPASKAVIGPVDRIFTRVGAADDLASGRSTFMVEMTETANILHNATENSLVLMDEIGRGTSTYDGLSLAWACAENLASRIKAMTLFATHYFELTTLPEKMEGVVNVHLDALEHGDTIAFMHSVQDGAASKSYGLAVAALAGVPREVIKRARQKLRELEAISSHTATGTVDATQMTLLNEETSPAVEALEALDPDSLSPRQALEWIYRLKNMV.

614–621 lines the ATP pocket; sequence GPNMGGKS.

It belongs to the DNA mismatch repair MutS family.

In terms of biological role, this protein is involved in the repair of mismatches in DNA. It is possible that it carries out the mismatch recognition step. This protein has a weak ATPase activity. This is DNA mismatch repair protein MutS from Serratia proteamaculans (strain 568).